The chain runs to 306 residues: Ribosomal protein L11 methyltransferase (306 aa).

The S-adenosyl-L-methionine site is built by Thr152, Gly179, Asp201, and Asn243.

The protein belongs to the methyltransferase superfamily. PrmA family.

It localises to the cytoplasm. It catalyses the reaction L-lysyl-[protein] + 3 S-adenosyl-L-methionine = N(6),N(6),N(6)-trimethyl-L-lysyl-[protein] + 3 S-adenosyl-L-homocysteine + 3 H(+). Methylates ribosomal protein L11. The polypeptide is Ribosomal protein L11 methyltransferase (Geobacter sp. (strain M21)).